The chain runs to 332 residues: L-lactate dehydrogenase A chain (332 aa).

Lysine 5 is modified (N6-acetyllysine; alternate). Lysine 5 is modified (N6-succinyllysine; alternate). Lysine 14 bears the N6-acetyllysine mark. A Phosphothreonine modification is found at threonine 18. 29–57 is a binding site for NAD(+); the sequence is GAVGMACAISILMKDLADELALVDVIEDK. Lysine 57 is modified (N6-acetyllysine; alternate). Residue lysine 57 forms a Glycyl lysine isopeptide (Lys-Gly) (interchain with G-Cter in SUMO2); alternate linkage. Lysine 81 bears the N6-acetyllysine mark. Arginine 99 contacts NAD(+). Position 106 (arginine 106) interacts with substrate. Lysine 118 is modified (N6-acetyllysine; alternate). Lysine 118 carries the post-translational modification N6-succinyllysine; alternate. Lysine 126 is modified (N6-acetyllysine). Asparagine 138 serves as a coordination point for NAD(+). Positions 138 and 169 each coordinate substrate. Histidine 193 (proton acceptor) is an active-site residue. Position 232 is an N6-acetyllysine (lysine 232). Tyrosine 239 is modified (phosphotyrosine). At lysine 243 the chain carries N6-acetyllysine. Threonine 248 is a substrate binding site. Phosphothreonine is present on residues threonine 309 and threonine 322.

Belongs to the LDH/MDH superfamily. LDH family. As to quaternary structure, homotetramer. Interacts with PTEN upstream reading frame protein MP31. In terms of processing, ISGylated.

The protein localises to the cytoplasm. It carries out the reaction (S)-lactate + NAD(+) = pyruvate + NADH + H(+). It participates in fermentation; pyruvate fermentation to lactate; (S)-lactate from pyruvate: step 1/1. In terms of biological role, interconverts simultaneously and stereospecifically pyruvate and lactate with concomitant interconversion of NADH and NAD(+). The polypeptide is L-lactate dehydrogenase A chain (LDHA) (Monodelphis domestica (Gray short-tailed opossum)).